A 104-amino-acid chain; its full sequence is ATP-dependent Clp protease adapter protein ClpS (104 aa).

It belongs to the ClpS family. As to quaternary structure, binds to the N-terminal domain of the chaperone ClpA.

Its function is as follows. Involved in the modulation of the specificity of the ClpAP-mediated ATP-dependent protein degradation. The sequence is that of ATP-dependent Clp protease adapter protein ClpS from Burkholderia thailandensis (strain ATCC 700388 / DSM 13276 / CCUG 48851 / CIP 106301 / E264).